A 434-amino-acid polypeptide reads, in one-letter code: Xylose isomerase (434 aa).

Catalysis depends on residues H99 and D102. Residues E230, E266, H269, D294, D305, D307, and D337 each contribute to the Mg(2+) site.

This sequence belongs to the xylose isomerase family. As to quaternary structure, homotetramer. Mg(2+) serves as cofactor.

The protein resides in the cytoplasm. It carries out the reaction alpha-D-xylose = alpha-D-xylulofuranose. This is Xylose isomerase from Dinoroseobacter shibae (strain DSM 16493 / NCIMB 14021 / DFL 12).